A 314-amino-acid polypeptide reads, in one-letter code: uncharacterized protein (314 aa).

A disordered region spans residues 1 to 70; that stretch reads MAGNSQRRGA…QGRHKKTDDT (70 aa). The segment covering 44-65 has biased composition (basic residues); the sequence is RPHHPAGKRAAKAARQAQGRHK. Residues glycine 265, isoleucine 285, and leucine 294 each coordinate S-adenosyl-L-methionine.

This sequence belongs to the class IV-like SAM-binding methyltransferase superfamily. RNA methyltransferase TrmH family.

This is an uncharacterized protein from Mycolicibacterium gilvum (strain PYR-GCK) (Mycobacterium gilvum (strain PYR-GCK)).